The chain runs to 852 residues: Zinc finger and SCAN domain-containing protein 29 (852 aa).

The SCAN box domain occupies 18–100; the sequence is RQRFRRFHYQ…TLVEDLEREP (83 aa). Disordered stretches follow at residues 96–182, 347–400, and 502–557; these read LERE…PKSG, ASHS…SAAP, and PNDG…RAPV. Lys112 participates in a covalent cross-link: Glycyl lysine isopeptide (Lys-Gly) (interchain with G-Cter in SUMO2). Ser153 carries the post-translational modification Phosphoserine. A Glycyl lysine isopeptide (Lys-Gly) (interchain with G-Cter in SUMO2) cross-link involves residue Lys180. Residues 508 to 517 show a composition bias toward polar residues; it reads ETASCPVQGT. The segment covering 528–545 has biased composition (acidic residues); it reads EADEATEEDSDDDEEDTE. A Phosphoserine modification is found at Ser561. Lys576 is covalently cross-linked (Glycyl lysine isopeptide (Lys-Gly) (interchain with G-Cter in SUMO2)). The interval 603–625 is disordered; that stretch reads QGKGNESDCRSGRQWAKTSGEKR. Residue Lys652 forms a Glycyl lysine isopeptide (Lys-Gly) (interchain with G-Cter in SUMO2) linkage. 6 C2H2-type zinc fingers span residues 678-700, 706-728, 734-756, 762-784, 790-812, and 818-840; these read YKCADCGKSFSRSARLIRHRRIH, YKCLDCGKSFRDSSNFITHRRIH, YQCGECGKCFNQSSSLIIHQRTH, YQCEECGKSFNNSSHFSAHRRIH, HVCPDCGKSFSKSSDLRAHHRTH, and YGCHDCGKCFSKSSALNKHGEIH.

This sequence belongs to the krueppel C2H2-type zinc-finger protein family.

Its subcellular location is the nucleus. In terms of biological role, may be involved in transcriptional regulation. The sequence is that of Zinc finger and SCAN domain-containing protein 29 (ZSCAN29) from Homo sapiens (Human).